The primary structure comprises 259 residues: Thiazole synthase (259 aa).

K99 serves as the catalytic Schiff-base intermediate with DXP. 1-deoxy-D-xylulose 5-phosphate contacts are provided by residues G160, A186–G187, and N208–T209.

The protein belongs to the ThiG family. In terms of assembly, homotetramer. Forms heterodimers with either ThiH or ThiS.

It localises to the cytoplasm. The enzyme catalyses [ThiS sulfur-carrier protein]-C-terminal-Gly-aminoethanethioate + 2-iminoacetate + 1-deoxy-D-xylulose 5-phosphate = [ThiS sulfur-carrier protein]-C-terminal Gly-Gly + 2-[(2R,5Z)-2-carboxy-4-methylthiazol-5(2H)-ylidene]ethyl phosphate + 2 H2O + H(+). It participates in cofactor biosynthesis; thiamine diphosphate biosynthesis. Functionally, catalyzes the rearrangement of 1-deoxy-D-xylulose 5-phosphate (DXP) to produce the thiazole phosphate moiety of thiamine. Sulfur is provided by the thiocarboxylate moiety of the carrier protein ThiS. In vitro, sulfur can be provided by H(2)S. The protein is Thiazole synthase of Porphyromonas gingivalis (strain ATCC BAA-308 / W83).